A 297-amino-acid chain; its full sequence is tRNA pseudouridine synthase B (297 aa).

The active-site Nucleophile is Asp39.

This sequence belongs to the pseudouridine synthase TruB family. Type 1 subfamily.

It carries out the reaction uridine(55) in tRNA = pseudouridine(55) in tRNA. In terms of biological role, responsible for synthesis of pseudouridine from uracil-55 in the psi GC loop of transfer RNAs. This chain is tRNA pseudouridine synthase B, found in Lactobacillus gasseri (strain ATCC 33323 / DSM 20243 / BCRC 14619 / CIP 102991 / JCM 1131 / KCTC 3163 / NCIMB 11718 / NCTC 13722 / AM63).